Here is a 585-residue protein sequence, read N- to C-terminus: Protein FAM13C (585 aa).

Disordered regions lie at residues 26–45, 83–138, and 171–216; these read PVSLHEDQTDCSSLRDENNK, SMGN…NAFK, and EAAQ…APED. Composition is skewed to basic and acidic residues over residues 27–45 and 99–112; these read VSLHEDQTDCSSLRDENNK and ESGRSHGESQETEH. S131 carries the phosphoserine modification. S238 is subject to Phosphoserine. 3 disordered regions span residues 250–282, 349–391, and 441–477; these read FNLDPESAPSPPSTQQFMMPRSSSRCSCGDGKE, EEQG…EETP, and IPTIQEEEDSDEDRPQGSQQPSLADPASHLPVGDHLT. Residues 262–275 are compositionally biased toward polar residues; that stretch reads STQQFMMPRSSSRC. A phosphoserine mark is found at S385 and S386.

Belongs to the FAM13 family.

The sequence is that of Protein FAM13C (FAM13C) from Homo sapiens (Human).